Consider the following 212-residue polypeptide: Ribonuclease HII (212 aa).

One can recognise an RNase H type-2 domain in the interval methionine 1 to glutamine 205. A divalent metal cation is bound by residues aspartate 7, glutamate 8, and aspartate 100.

The protein belongs to the RNase HII family. It depends on Mn(2+) as a cofactor. Mg(2+) serves as cofactor.

The protein resides in the cytoplasm. It carries out the reaction Endonucleolytic cleavage to 5'-phosphomonoester.. In terms of biological role, endonuclease that specifically degrades the RNA of RNA-DNA hybrids. The polypeptide is Ribonuclease HII (Methanocorpusculum labreanum (strain ATCC 43576 / DSM 4855 / Z)).